The sequence spans 78 residues: Small ribosomal subunit protein bS16c (78 aa).

Belongs to the bacterial ribosomal protein bS16 family.

It localises to the plastid. It is found in the chloroplast. The polypeptide is Small ribosomal subunit protein bS16c (Daucus carota (Wild carrot)).